A 155-amino-acid chain; its full sequence is 2-C-methyl-D-erythritol 2,4-cyclodiphosphate synthase (155 aa).

Residues aspartate 8 and histidine 10 each contribute to the a divalent metal cation site. Residues 8 to 10 (DVH) and 34 to 35 (HS) each bind 4-CDP-2-C-methyl-D-erythritol 2-phosphate. Histidine 42 serves as a coordination point for a divalent metal cation. Residues 56–58 (DIG), 61–65 (FPDSD), 100–106 (AQKPKML), 132–135 (TTEE), phenylalanine 139, and lysine 142 contribute to the 4-CDP-2-C-methyl-D-erythritol 2-phosphate site.

Belongs to the IspF family. Homotrimer. The cofactor is a divalent metal cation.

It catalyses the reaction 4-CDP-2-C-methyl-D-erythritol 2-phosphate = 2-C-methyl-D-erythritol 2,4-cyclic diphosphate + CMP. It participates in isoprenoid biosynthesis; isopentenyl diphosphate biosynthesis via DXP pathway; isopentenyl diphosphate from 1-deoxy-D-xylulose 5-phosphate: step 4/6. Its function is as follows. Involved in the biosynthesis of isopentenyl diphosphate (IPP) and dimethylallyl diphosphate (DMAPP), two major building blocks of isoprenoid compounds. Catalyzes the conversion of 4-diphosphocytidyl-2-C-methyl-D-erythritol 2-phosphate (CDP-ME2P) to 2-C-methyl-D-erythritol 2,4-cyclodiphosphate (ME-CPP) with a corresponding release of cytidine 5-monophosphate (CMP). This chain is 2-C-methyl-D-erythritol 2,4-cyclodiphosphate synthase, found in Clostridium botulinum (strain Kyoto / Type A2).